We begin with the raw amino-acid sequence, 117 residues long: Small ribosomal subunit protein bS6 (117 aa).

The disordered stretch occupies residues 96–117 (HAEGPSVQMQKRDERDSRRERR). The segment covering 105 to 117 (QKRDERDSRRERR) has biased composition (basic and acidic residues).

The protein belongs to the bacterial ribosomal protein bS6 family.

Binds together with bS18 to 16S ribosomal RNA. The protein is Small ribosomal subunit protein bS6 of Ruegeria pomeroyi (strain ATCC 700808 / DSM 15171 / DSS-3) (Silicibacter pomeroyi).